Consider the following 408-residue polypeptide: GTPase Obg (408 aa).

The Obg domain maps to 1-159 (MKFFDEARIE…RNLHLELKVL (159 aa)). One can recognise an OBG-type G domain in the interval 160-334 (ADVGLLGMPN…LIFALQDFLD (175 aa)). GTP contacts are provided by residues 166 to 173 (GMPNAGKS), 191 to 195 (FTTLQ), 213 to 216 (DIPG), 284 to 287 (NKLD), and 315 to 317 (SAL). Positions 173 and 193 each coordinate Mg(2+). The disordered stretch occupies residues 385-408 (AEDALAEDALDDDADGEDADPNAR).

Belongs to the TRAFAC class OBG-HflX-like GTPase superfamily. OBG GTPase family. In terms of assembly, monomer. Mg(2+) serves as cofactor.

It localises to the cytoplasm. In terms of biological role, an essential GTPase which binds GTP, GDP and possibly (p)ppGpp with moderate affinity, with high nucleotide exchange rates and a fairly low GTP hydrolysis rate. Plays a role in control of the cell cycle, stress response, ribosome biogenesis and in those bacteria that undergo differentiation, in morphogenesis control. The sequence is that of GTPase Obg from Azoarcus sp. (strain BH72).